We begin with the raw amino-acid sequence, 348 residues long: tRNA (cytosine(34)-C(5))-methyltransferase, mitochondrial (348 aa).

S-adenosyl-L-methionine contacts are provided by residues 139–145 (CAAPGGK), Glu162, Asp193, and Asp211. Cys265 functions as the Nucleophile in the catalytic mechanism.

Belongs to the class I-like SAM-binding methyltransferase superfamily. RsmB/NOP family.

The protein resides in the mitochondrion matrix. It catalyses the reaction cytidine(34) in mitochondrial tRNA + S-adenosyl-L-methionine = 5-methylcytidine(34) in mitochondrial tRNA + S-adenosyl-L-homocysteine + H(+). In terms of biological role, mitochondrial tRNA methyltransferase that mediates methylation of cytosine to 5-methylcytosine (m5C) at position 34 of mt-tRNA(Met). mt-tRNA(Met) methylation at cytosine(34) takes place at the wobble position of the anticodon and initiates the formation of 5-formylcytosine (f(5)c) at this position. mt-tRNA(Met) containing the f(5)c modification at the wobble position enables recognition of the AUA codon in addition to the AUG codon, expanding codon recognition in mitochondrial translation. The polypeptide is tRNA (cytosine(34)-C(5))-methyltransferase, mitochondrial (Mus musculus (Mouse)).